Here is a 545-residue protein sequence, read N- to C-terminus: Thermosome subunit alpha (545 aa).

It belongs to the TCP-1 chaperonin family. Forms a Heterooligomeric complex of two stacked eight-membered rings.

Molecular chaperone; binds unfolded polypeptides in vitro, and has a weak ATPase activity. In Archaeoglobus fulgidus (strain ATCC 49558 / DSM 4304 / JCM 9628 / NBRC 100126 / VC-16), this protein is Thermosome subunit alpha (thsA).